The primary structure comprises 273 residues: Energy-coupling factor transporter ATP-binding protein EcfA (273 aa).

One can recognise an ABC transporter domain in the interval 2–237; that stretch reads ISIRDLTYFY…RASLLALGLA (236 aa). 36–43 is a binding site for ATP; that stretch reads GRNGSGKS.

The protein belongs to the ABC transporter superfamily. Energy-coupling factor EcfA family. In terms of assembly, forms a stable energy-coupling factor (ECF) transporter complex composed of 2 membrane-embedded substrate-binding proteins (S component), 2 ATP-binding proteins (A component) and 2 transmembrane proteins (T component).

The protein resides in the cell membrane. In terms of biological role, ATP-binding (A) component of a common energy-coupling factor (ECF) ABC-transporter complex. Unlike classic ABC transporters this ECF transporter provides the energy necessary to transport a number of different substrates. This Syntrophomonas wolfei subsp. wolfei (strain DSM 2245B / Goettingen) protein is Energy-coupling factor transporter ATP-binding protein EcfA.